A 90-amino-acid chain; its full sequence is Probable Fe(2+)-trafficking protein (90 aa).

Belongs to the Fe(2+)-trafficking protein family.

Could be a mediator in iron transactions between iron acquisition and iron-requiring processes, such as synthesis and/or repair of Fe-S clusters in biosynthetic enzymes. The polypeptide is Probable Fe(2+)-trafficking protein (Photobacterium profundum (strain SS9)).